The primary structure comprises 211 residues: MFISFEGIDASGKSTVMDLFAKYLKIKFPEKEIVTTFEPGGKNLKEALQIREFLLSKNNQISPYVEMLLFATARRIHLERLIWPALKAGKIVLCDRYIDSSIAYQGFGNGLDIDLVTSLNSLISENTFPDLTIFLDIKISKAFERMGIFRDHNRDRLENRGVEFYEKVINGYEFLAKKNKNFFKIDGNGTYDEVLDLIIDFFEKYYASWPK.

An ATP-binding site is contributed by 7 to 14 (GIDASGKS).

The protein belongs to the thymidylate kinase family.

The catalysed reaction is dTMP + ATP = dTDP + ADP. Functionally, phosphorylation of dTMP to form dTDP in both de novo and salvage pathways of dTTP synthesis. The protein is Thymidylate kinase of Mesomycoplasma hyopneumoniae (strain 232) (Mycoplasma hyopneumoniae).